We begin with the raw amino-acid sequence, 703 residues long: Polyribonucleotide nucleotidyltransferase (703 aa).

The Mg(2+) site is built by Asp486 and Asp492. Positions 553 to 612 constitute a KH domain; it reads PKIEIIHINPDKIRDVIGPGGKKINEIIDATGVKLDIEQDGTVFIGSSDASMIEAAKKLI. The region spanning 622-690 is the S1 motif domain; sequence GQIYMATVKR…KQGRVNASRK (69 aa).

Belongs to the polyribonucleotide nucleotidyltransferase family. It depends on Mg(2+) as a cofactor.

The protein localises to the cytoplasm. It carries out the reaction RNA(n+1) + phosphate = RNA(n) + a ribonucleoside 5'-diphosphate. Its function is as follows. Involved in mRNA degradation. Catalyzes the phosphorolysis of single-stranded polyribonucleotides processively in the 3'- to 5'-direction. This is Polyribonucleotide nucleotidyltransferase from Macrococcus caseolyticus (strain JCSC5402) (Macrococcoides caseolyticum).